We begin with the raw amino-acid sequence, 402 residues long: 26S proteasome regulatory subunit 8 (402 aa).

186 to 193 (GPPGTGKT) is a binding site for ATP.

This sequence belongs to the AAA ATPase family.

Its subcellular location is the cytoplasm. The protein resides in the nucleus. Functionally, the 26S proteasome is involved in the ATP-dependent degradation of ubiquitinated proteins. The regulatory (or ATPase) complex confers ATP dependency and substrate specificity to the 26S complex. The chain is 26S proteasome regulatory subunit 8 from Manduca sexta (Tobacco hawkmoth).